Consider the following 501-residue polypeptide: Lysine--tRNA ligase (501 aa).

2 residues coordinate Mg(2+): E411 and E418.

Belongs to the class-II aminoacyl-tRNA synthetase family. Homodimer. It depends on Mg(2+) as a cofactor.

The protein resides in the cytoplasm. The enzyme catalyses tRNA(Lys) + L-lysine + ATP = L-lysyl-tRNA(Lys) + AMP + diphosphate. The polypeptide is Lysine--tRNA ligase (Shewanella woodyi (strain ATCC 51908 / MS32)).